The following is a 491-amino-acid chain: Glycylpeptide N-tetradecanoyltransferase (491 aa).

45–48 lines the tetradecanoyl-CoA pocket; sequence HKFW. Residues 53–79 form a disordered region; that stretch reads VPQITGSGASAPMEEGPIDDPKTPADV. Residues 182 to 184 and 190 to 194 contribute to the tetradecanoyl-CoA site; these read LCV and SKRLA. Leucine 491 acts as the Proton acceptor; via carboxylate in catalysis.

It belongs to the NMT family. Monomer.

It localises to the cytoplasm. It carries out the reaction N-terminal glycyl-[protein] + tetradecanoyl-CoA = N-tetradecanoylglycyl-[protein] + CoA + H(+). In terms of biological role, adds a myristoyl group to the N-terminal glycine residue of certain cellular proteins. The chain is Glycylpeptide N-tetradecanoyltransferase from Cryptococcus neoformans (Filobasidiella neoformans).